The primary structure comprises 914 residues: MPGEAPVEDYDPKEIEPKWRERWLEERKYRFEGGEDRPAFVIDTPPPYPTGELHMGHVLNWTYMDVVARYKRMCGYDVFFPQGWDCHGLPTEVKVEEIHGITKRDAPRREFRKLCEELTLENIRKMREQLIQLGCSIDWWTDCIDYENEELKELGSYVTMDPDYIRRSQYGFLELLEKGYAYREEHPVNWCPRCETAIAFAEVEYVTRETYLNYIEFPVADGDGSVTIATTRPELLPACVAVAVHPDDDRYSDLVGKKLVVPLHERFGDRDTPWEVPVIADEEVDPEFGTGIVMICTFGDKQDVAWVKRHDLPIVRAIDEQGKMTEVAGEFAGMEVEEARAAIVEALKEEGYLVKREKITQNVGVCWRCKTPIEILVKEQWFVKVRELAEDVKEAARKMVWIPEHMRKRLEDWTESMDWDWCISRQRIFATPIPVWYCKECGEVIPAEKDQLPVDPTRDDPPVDECPKCGCSEFEPETDVMDTWMDSSITPLVITGWPDEEPDLPVDLRPQGHDIIRTWLYYTTVRALVHADTEPFKEILINGMVFGEDGYKMSKSRGNVVEPTEVIEEYGADALRYWAVSSGAPGSDVQYMTKTIKRGYRFAKKIWNVCRLAKDHIDDAPSVEEVEGDLTPADRWILSKFHRLVDEVTEHLESGYRFNDAIKAIEEFAWEELADDYLEMAKLRLYRPEELGEGSREAARAVLRHVLDGLLRLLAPFMPFVTEELYYRLFDESVHDQAWPEASEKWIDEGVEEVGEILREIVTEVRKAKTDAGLRMGAEFEGLTVHVQDEELAESLEKAIPDLKSATRAKEVEVEVGEPKLERVPVKVEPRMDVIGPKYRELTRDIIEYVENNPDEVASAIKEDGKAKLEIDGEKVVLDEECVDVEWELRVKGGEGKAVEIRPGVVVEIRGLST.

A 'HIGH' region motif is present at residues 47–57 (PYPTGELHMGH). The 'KMSKS' region signature appears at 552–556 (KMSKS). Residue lysine 555 coordinates ATP.

The protein belongs to the class-I aminoacyl-tRNA synthetase family. ValS type 2 subfamily.

It localises to the cytoplasm. It catalyses the reaction tRNA(Val) + L-valine + ATP = L-valyl-tRNA(Val) + AMP + diphosphate. Functionally, catalyzes the attachment of valine to tRNA(Val). As ValRS can inadvertently accommodate and process structurally similar amino acids such as threonine, to avoid such errors, it has a 'posttransfer' editing activity that hydrolyzes mischarged Thr-tRNA(Val) in a tRNA-dependent manner. This chain is Valine--tRNA ligase, found in Methanopyrus kandleri (strain AV19 / DSM 6324 / JCM 9639 / NBRC 100938).